A 202-amino-acid polypeptide reads, in one-letter code: Small ribosomal subunit protein uS2 (202 aa).

The protein belongs to the universal ribosomal protein uS2 family. Part of the 30S ribosomal subunit.

The chain is Small ribosomal subunit protein uS2 from Pyrococcus furiosus (strain ATCC 43587 / DSM 3638 / JCM 8422 / Vc1).